The chain runs to 186 residues: ATP synthase subunit delta (186 aa).

It belongs to the ATPase delta chain family. In terms of assembly, F-type ATPases have 2 components, F(1) - the catalytic core - and F(0) - the membrane proton channel. F(1) has five subunits: alpha(3), beta(3), gamma(1), delta(1), epsilon(1). CF(0) has four main subunits: a(1), b(1), b'(1) and c(10-14). The alpha and beta chains form an alternating ring which encloses part of the gamma chain. F(1) is attached to F(0) by a central stalk formed by the gamma and epsilon chains, while a peripheral stalk is formed by the delta, b and b' chains.

It is found in the cell inner membrane. In terms of biological role, f(1)F(0) ATP synthase produces ATP from ADP in the presence of a proton or sodium gradient. F-type ATPases consist of two structural domains, F(1) containing the extramembraneous catalytic core and F(0) containing the membrane proton channel, linked together by a central stalk and a peripheral stalk. During catalysis, ATP synthesis in the catalytic domain of F(1) is coupled via a rotary mechanism of the central stalk subunits to proton translocation. Functionally, this protein is part of the stalk that links CF(0) to CF(1). It either transmits conformational changes from CF(0) to CF(1) or is implicated in proton conduction. The sequence is that of ATP synthase subunit delta from Rhodopseudomonas palustris (strain BisB18).